A 1029-amino-acid chain; its full sequence is Ig-like and fibronectin type-III domain-containing protein 1 (1029 aa).

A signal peptide spans 1–22 (MCNVAEDPSSFSTITIATTCRA). Topologically, residues 23–918 (EWPKVSPCIA…RRSASKGSSS (896 aa)) are extracellular. N-linked (GlcNAc...) asparagine glycans are attached at residues asparagine 36, asparagine 93, asparagine 120, and asparagine 165. One can recognise a Fibronectin type-III 1 domain in the interval 90 to 181 (APGNVTISEL…TAKLFSTLPT (92 aa)). The region spanning 185-227 (PLCTIGEPIYMNDGRVMICDAVNPCPNGFRCTGAGSDLSYCCP) is the WR1 domain. N-linked (GlcNAc...) asparagine glycans are attached at residues asparagine 257, asparagine 374, asparagine 409, asparagine 442, asparagine 482, asparagine 507, and asparagine 552. 2 consecutive Fibronectin type-III domains span residues 330-417 (AVRN…TKPA) and 427-523 (APEK…AQKD). The Ig-like C2-type domain occupies 619-710 (ASVTMKKDKI…SRVEASSEVI (92 aa)). Cysteine 640 and cysteine 693 are oxidised to a cystine. Asparagine 753 carries an N-linked (GlcNAc...) asparagine glycan. The Fibronectin type-III 4 domain occupies 817 to 909 (APSEVSNVRI…SAIPKDSEPR (93 aa)). The helical transmembrane segment at 919–939 (AFWIVVILVVFGVLIAGLAVL) threads the bilayer. Residues 940–1029 (SKRRELPYPI…NGMRYAKLET (90 aa)) are Cytoplasmic-facing. Residues 988–1021 (SATTGTAAATQSEWQSANLEANSTTDNSHEYRNG) form a disordered region. The span at 998–1013 (QSEWQSANLEANSTTD) shows a compositional bias: polar residues.

Its subcellular location is the cell membrane. This chain is Ig-like and fibronectin type-III domain-containing protein 1, found in Caenorhabditis elegans.